A 109-amino-acid chain; its full sequence is Glutaredoxin 4 (109 aa).

One can recognise a Glutaredoxin domain in the interval 4 to 106 (LDKIKKQISE…TLLADVAAKY (103 aa)). K21 is a binding site for glutathione. C29 provides a ligand contact to [2Fe-2S] cluster. Glutathione is bound by residues R58, F70, and 83–84 (CD).

This sequence belongs to the glutaredoxin family. Monothiol subfamily. In terms of assembly, homodimer.

The protein resides in the cytoplasm. Its function is as follows. Monothiol glutaredoxin involved in the biogenesis of iron-sulfur clusters. The polypeptide is Glutaredoxin 4 (grxD) (Pasteurella multocida (strain Pm70)).